The primary structure comprises 500 residues: NAD(P)H-quinone oxidoreductase chain 4, chloroplastic (500 aa).

The next 14 helical transmembrane spans lie at 4–24 (FPWL…IFLF), 31–51 (VIKW…TYAF), 84–104 (GFSL…TLAA), 111–129 (SRLF…IGLF), 134–154 (LLLF…LLSM), 167–187 (FILY…GIAL), 208–228 (ALEI…SPII), 242–262 (HYST…YGLV), 272–292 (AHSI…IYAA), 305–325 (IAYS…SISD), 330–350 (GAIL…FLAG), 386–406 (LALP…GIIT), 416–436 (ILIT…LLSM), and 463–483 (FVSI…DFVF).

The protein belongs to the complex I subunit 4 family.

The protein localises to the plastid. It localises to the chloroplast thylakoid membrane. It carries out the reaction a plastoquinone + NADH + (n+1) H(+)(in) = a plastoquinol + NAD(+) + n H(+)(out). It catalyses the reaction a plastoquinone + NADPH + (n+1) H(+)(in) = a plastoquinol + NADP(+) + n H(+)(out). This chain is NAD(P)H-quinone oxidoreductase chain 4, chloroplastic, found in Manihot esculenta (Cassava).